We begin with the raw amino-acid sequence, 338 residues long: DNA-directed RNA polymerase subunit alpha (338 aa).

The tract at residues 1–234 (MIHKNWAELI…DQLSIFVNFD (234 aa)) is alpha N-terminal domain (alpha-NTD). The tract at residues 250-338 (FNPLLLKKVD…DLAKKFEDAF (89 aa)) is alpha C-terminal domain (alpha-CTD).

It belongs to the RNA polymerase alpha chain family. In terms of assembly, homodimer. The RNAP catalytic core consists of 2 alpha, 1 beta, 1 beta' and 1 omega subunit. When a sigma factor is associated with the core the holoenzyme is formed, which can initiate transcription.

It catalyses the reaction RNA(n) + a ribonucleoside 5'-triphosphate = RNA(n+1) + diphosphate. Functionally, DNA-dependent RNA polymerase catalyzes the transcription of DNA into RNA using the four ribonucleoside triphosphates as substrates. This is DNA-directed RNA polymerase subunit alpha from Ruegeria pomeroyi (strain ATCC 700808 / DSM 15171 / DSS-3) (Silicibacter pomeroyi).